The primary structure comprises 650 residues: Acetyl-coenzyme A synthetase (650 aa).

CoA is bound by residues 191 to 194 (RGGR), threonine 311, and asparagine 335. ATP is bound by residues 387-389 (GEP), 411-416 (DTWWQT), aspartate 500, and arginine 515. Serine 523 is a CoA binding site. Arginine 526 contacts ATP. The Mg(2+) site is built by valine 537, histidine 539, and valine 542. Position 584 (arginine 584) interacts with CoA. Residue lysine 609 is modified to N6-acetyllysine.

Belongs to the ATP-dependent AMP-binding enzyme family. It depends on Mg(2+) as a cofactor. Acetylated. Deacetylation by the SIR2-homolog deacetylase activates the enzyme.

It carries out the reaction acetate + ATP + CoA = acetyl-CoA + AMP + diphosphate. Catalyzes the conversion of acetate into acetyl-CoA (AcCoA), an essential intermediate at the junction of anabolic and catabolic pathways. AcsA undergoes a two-step reaction. In the first half reaction, AcsA combines acetate with ATP to form acetyl-adenylate (AcAMP) intermediate. In the second half reaction, it can then transfer the acetyl group from AcAMP to the sulfhydryl group of CoA, forming the product AcCoA. In Shewanella amazonensis (strain ATCC BAA-1098 / SB2B), this protein is Acetyl-coenzyme A synthetase.